The chain runs to 1706 residues: Bifunctional hemolysin/adenylate cyclase (1706 aa).

The interval 1-399 (MQQSHQAGYA…RRPSLGAVER (399 aa)) is a, catalytic. 349-356 (AYGVAGKS) is an ATP binding site. Residues 367 to 405 (GVPGGRSKSSPDVLETVPASPGLRRPSLGAVERQDSGYD) are disordered. Residues 400–912 (QDSGYDSLDG…LKHSIKLEVI (513 aa)) are b, Ala/Gly-rich. The tract at residues 500–698 (LSAAVFGLGE…SVVGAPVAVV (199 aa)) is required for interaction with CyaC. 2 N6-palmitoyl lysine lipidation sites follow: K860 and K983. A c region spans residues 913–1656 (GGDGDDVVLA…RDADHRVEAI (744 aa)). Hemolysin-type calcium-binding repeat units lie at residues 1014–1031 (IGGA…DNFL), 1032–1049 (AGGA…NDTL), 1050–1067 (VGGE…DDVF), 1155–1172 (WGDD…DDIL), 1173–1190 (RGGL…NDIF), 1279–1296 (MGQG…DDLL), 1297–1314 (FGGD…NDTL), 1315–1332 (YGGL…NDWF), 1335–1352 (TPAR…VDTV), 1411–1428 (TGDA…ADVL), 1429–1446 (AGGE…DDQL), 1447–1464 (SGDA…DDWF), 1468–1484 (AANA…NDTV), 1537–1554 (IGDA…NDVL), 1555–1572 (SGGA…SDLL), 1573–1590 (SGDA…DDTY), and 1603–1620 (ESGG…ADQL). The tract at residues 1657-1706 (HAANQAIDPAGIEKLVEAMAQYPDPGAAAAAPPAARVPDTLMQSLAVNWR) is d, Asp/Gly-rich.

In the N-terminal section; belongs to the adenylyl cyclase class-2 family. It in the C-terminal section; belongs to the RTX prokaryotic toxin family. Released in a processed form. In terms of processing, palmitoylated at Lys-860 and Lys-983 by CyaC. The toxin only becomes active when modified in position Lys-983: palmitoylation is required for efficient membrane insertion and pore formation of the acylated Hemolysin chain.

The protein resides in the secreted. Its subcellular location is the host cell membrane. It carries out the reaction ATP = 3',5'-cyclic AMP + diphosphate. Its activity is regulated as follows. Activated by host calmodulin. In terms of biological role, bifunctional adenylate cyclase toxin-hemolysin that plays a crucial role in host colonization. It causes whooping cough by acting on mammalian cells by elevating cAMP-concentration and thus disrupts normal cell function. Its function is as follows. Adenylate cyclase that is activated by host intracellular calmodulin and catalyzes un-regulated conversion of ATP to cAMP, thereby impairing microbicidal functions of immune effector cells and inducing apoptosis of lung macrophages. Hemolysin that forms small cation-selective membrane channels, leading to hemolytic activity. The hemolytic activity of CyaA is weak compared with that of the HlyA of E.coli. This chain is Bifunctional hemolysin/adenylate cyclase (cya), found in Bordetella bronchiseptica (strain ATCC BAA-588 / NCTC 13252 / RB50) (Alcaligenes bronchisepticus).